Reading from the N-terminus, the 2325-residue chain is Centriolin (2325 aa).

A disordered region spans residues 1-33 (MKKGSQQKIFSKAKIPSSSHSPIPSSMSNMRSR). The span at 16-33 (PSSSHSPIPSSMSNMRSR) shows a compositional bias: low complexity. LRR repeat units lie at residues 126–147 (KLEVLNLSYNLIGKIEKLDKLL), 148–169 (KLRELNLSYNKISKIEGIENMC), 170–191 (NLQKLNLAGNEIEHIPVWLGKK), and 194–215 (SLRVLNLKGNKISSLQDISKLK). The region spanning 228–266 (NPVVTLPHYLQFTIFHLRSLESLEGQPVTTQDRQEAFER) is the LRRCT domain. 2 coiled-coil regions span residues 267-343 (FSLE…IELT) and 435-799 (LDTQ…LNHV). A Phosphoserine modification is found at Ser831. A coiled-coil region spans residues 851-1101 (LARSKWERDE…ARLQNVLDLT (251 aa)). Residues 1150–1241 (PSSKVSSHSS…DQEEPPFVPP (92 aa)) are disordered. A compositionally biased stretch (acidic residues) spans 1224-1235 (SQEESELDDQEE). The stretch at 1317-2255 (EHHNLENEVS…DRLKAQLRHC (939 aa)) forms a coiled coil. Ser1475 bears the Phosphoserine mark. Residues 1948-2118 (MMFQRLQKER…ELVAQDNHER (171 aa)) form a required for centrosome localization region. Residues 1985–2325 (QKSKLDQVLS…QNQEKNASAR (341 aa)) form a sufficient for interaction with HOOK2 region. Positions 2288-2325 (VTSTSADSASSPSLSQLESSLTEDSQLGQNQEKNASAR) are disordered. A compositionally biased stretch (low complexity) spans 2290-2314 (STSADSASSPSLSQLESSLTEDSQL). The segment covering 2315-2325 (GQNQEKNASAR) has biased composition (polar residues).

In terms of assembly, interacts with HOOK2. Interacts with EXOC6 and SNAPIN. Associates with the exocyst complex. In terms of tissue distribution, widely expressed with highest levels in testis and trachea.

It localises to the cytoplasm. Its subcellular location is the cytoskeleton. The protein resides in the microtubule organizing center. It is found in the centrosome. The protein localises to the midbody. It localises to the midbody ring. Functionally, involved in cell cycle progression and cytokinesis. During the late steps of cytokinesis, anchors exocyst and SNARE complexes at the midbody, thereby allowing secretory vesicle-mediated abscission. The chain is Centriolin (CNTRL) from Homo sapiens (Human).